The chain runs to 365 residues: Galactoside alpha-(1,2)-fucosyltransferase 1 (365 aa).

Over 1 to 8 (MWPLSHRH) the chain is Cytoplasmic. Residues 9 to 25 (LCLAFLLVCVLSAISFF) form a helical; Signal-anchor for type II membrane protein membrane-spanning segment. Residues 26 to 365 (LHIYQDSIRH…LSPLWTLAEP (340 aa)) lie on the Lumenal side of the membrane. N-linked (GlcNAc...) asparagine glycans are attached at residues N65, N301, and N327.

This sequence belongs to the glycosyltransferase 11 family.

The protein resides in the golgi apparatus. Its subcellular location is the golgi stack membrane. The catalysed reaction is a beta-D-galactosyl-(1-&gt;4)-N-acetyl-beta-D-glucosaminyl derivative + GDP-beta-L-fucose = an alpha-L-Fuc-(1-&gt;2)-beta-D-Gal-(1-&gt;4)-beta-D-GlcNAc derivative + GDP + H(+). The enzyme catalyses a ganglioside GA1 + GDP-beta-L-fucose = a ganglioside Fuc-GA1 + GDP + H(+). It catalyses the reaction a beta-D-Gal-(1-&gt;3)-beta-D-GlcNAc-(1-&gt;3)-beta-D-Gal-(1-&gt;4)-beta-D-Glc-(1&lt;-&gt;1')-Cer(d18:1(4E)) + GDP-beta-L-fucose = alpha-L-fucosyl-(1-&gt;2)- beta-D-galactosyl-(1-&gt;3)-N-acetyl-beta-D-glucosaminyl-(1-&gt;3)-beta-D-galactosyl-(1-&gt;4)-beta-D-glucosyl-(1&lt;-&gt;1')-N-acylsphing-4-enine + GDP + H(+). It carries out the reaction a neolactoside nLc4Cer(d18:1(4E)) + GDP-beta-L-fucose = a neolactoside IV(2)-alpha-Fuc-nLc4Cer(d18:1(4E)) + GDP + H(+). The catalysed reaction is a ganglioside GM1 + GDP-beta-L-fucose = a ganglioside Fuc-GM1 + GDP + H(+). The enzyme catalyses beta-D-galactosyl-(1-&gt;3)-N-acetyl-D-galactosamine + GDP-beta-L-fucose = alpha-L-fucosyl-(1-&gt;2)-beta-D-galactosyl-(1-&gt;3)-N-acetyl-D-galactosamine + GDP + H(+). Its pathway is protein modification; protein glycosylation. Its function is as follows. Catalyzes the transfer of L-fucose, from a guanosine diphosphate-beta-L-fucose, to the terminal galactose residue of glycoconjugates through an alpha(1,2) linkage leading to H antigen synthesis that is an intermediate substrate in the synthesis of ABO blood group antigens. H antigen is essential for maturation of the glomerular layer of the main olfactory bulb, in cell migration and early cell-cell contacts during tumor associated angiogenesis. Preferentially fucosylates soluble lactose and to a lesser extent fucosylates glycolipids gangliosides GA1 and GM1a. This Mico humeralifer (Black and white tassel-ear marmoset) protein is Galactoside alpha-(1,2)-fucosyltransferase 1.